The primary structure comprises 132 residues: MSFTDPIGDMLTRIRNASSARHEKCLVPASRLKVRIAEVLREEGFIKDFVLHEDGVQGAITIVLKYSADREPAISDIKRVSKPGLRRYVATDSIPRVLNGMGIAILSTSKGVMVDREARKQKVGGELICTVW.

It belongs to the universal ribosomal protein uS8 family. Part of the 30S ribosomal subunit. Contacts proteins S5 and S12.

Functionally, one of the primary rRNA binding proteins, it binds directly to 16S rRNA central domain where it helps coordinate assembly of the platform of the 30S subunit. In Anaeromyxobacter dehalogenans (strain 2CP-C), this protein is Small ribosomal subunit protein uS8.